Consider the following 487-residue polypeptide: GTPase Der (487 aa).

EngA-type G domains lie at 5-169 (PKLA…SREI) and 178-351 (IKVA…ANSQ). GTP contacts are provided by residues 11–18 (GRPNVGKS), 58–62 (DTGGI), 121–124 (NKID), 184–191 (GRANVGKS), 231–235 (DTAGI), and 296–299 (NKWD). A KH-like domain is found at 352-439 (KRITTHQLNK…IHLKGKTKKD (88 aa)). Positions 441 to 466 (PVSSLSLTRKQTKSTDQENNEYDELY) are disordered.

This sequence belongs to the TRAFAC class TrmE-Era-EngA-EngB-Septin-like GTPase superfamily. EngA (Der) GTPase family. Associates with the 50S ribosomal subunit.

In terms of biological role, GTPase that plays an essential role in the late steps of ribosome biogenesis. The sequence is that of GTPase Der from Protochlamydia amoebophila (strain UWE25).